We begin with the raw amino-acid sequence, 364 residues long: Dihydroorotate dehydrogenase (quinone) (364 aa).

FMN-binding positions include 62 to 66 (AGFDK) and threonine 86. Residue lysine 66 coordinates substrate. 111-115 (NRMGF) serves as a coordination point for substrate. Residues asparagine 142 and asparagine 175 each contribute to the FMN site. Residue asparagine 175 participates in substrate binding. Serine 178 acts as the Nucleophile in catalysis. Asparagine 180 is a substrate binding site. Lysine 216 and threonine 244 together coordinate FMN. Substrate is bound at residue 245 to 246 (NT). Residues glycine 267, glycine 296, and 317 to 318 (YT) each bind FMN.

It belongs to the dihydroorotate dehydrogenase family. Type 2 subfamily. Monomer. It depends on FMN as a cofactor.

It is found in the cell membrane. The catalysed reaction is (S)-dihydroorotate + a quinone = orotate + a quinol. The protein operates within pyrimidine metabolism; UMP biosynthesis via de novo pathway; orotate from (S)-dihydroorotate (quinone route): step 1/1. In terms of biological role, catalyzes the conversion of dihydroorotate to orotate with quinone as electron acceptor. The polypeptide is Dihydroorotate dehydrogenase (quinone) (Anaeromyxobacter sp. (strain K)).